The chain runs to 376 residues: WW domain-binding protein 4 (376 aa).

The Matrin-type zinc finger occupies 11-42 (KFCDYCKCWIADNRPSVEFHERGKNHKENVAK). The span at 94–107 (ITPVTSTIPPTSTS) shows a compositional bias: low complexity. 3 disordered regions span residues 94–128 (ITPV…KGRW), 189–335 (SRWE…EPKV), and 356–376 (FKKR…GDDQ). WW domains are found at residues 122 to 155 (DPSK…KPEG) and 163 to 196 (TAVK…KPDD). Over residues 189–198 (SRWEKPDDFI) the composition is skewed to basic and acidic residues. The segment covering 203–215 (DLPSSKVNENSLG) has biased composition (polar residues). 2 stretches are compositionally biased toward basic and acidic residues: residues 218-229 (DESKSSDSHSDS) and 243-257 (ETEK…KNKN). Residues serine 220, serine 227, and serine 229 each carry the phosphoserine modification. A Phosphoserine modification is found at serine 262. A compositionally biased stretch (basic and acidic residues) spans 298–309 (QEIKQEVESHEE). Residues 316-326 (STENEYVSTSE) are compositionally biased toward polar residues. Residues 357-375 (KKRRTENGKSRNLRQRGDD) form an interaction with SNRNP200 region. The segment covering 361–376 (TENGKSRNLRQRGDDQ) has biased composition (basic and acidic residues).

Component of the spliceosome B complex. Associated with U2 snRNPs. Binds splicing factors SNRPB, SNRPC and SF1. Interacts via the WW domains with the Pro-rich domains of KHDRBS1/SAM68. Interacts via the WW domains with the Pro-rich domains of WBP11. Interacts with SNRNP200.

The protein resides in the nucleus. The protein localises to the nucleus speckle. In terms of biological role, involved in pre-mRNA splicing as a component of the spliceosome. May play a role in cross-intron bridging of U1 and U2 snRNPs in the mammalian A complex. The polypeptide is WW domain-binding protein 4 (WBP4) (Homo sapiens (Human)).